The sequence spans 257 residues: Nickel import system ATP-binding protein NikD (257 aa).

One can recognise an ABC transporter domain in the interval 4-245; that stretch reads IDIQNLTIKN…HLHPYTERLI (242 aa). Residue 37-44 participates in ATP binding; it reads GESGAGKS.

It belongs to the ABC transporter superfamily. The complex is composed of two ATP-binding proteins (NikD and NikE), two transmembrane proteins (NikB and NikC) and a solute-binding protein (NikA).

The protein resides in the cell membrane. It catalyses the reaction Ni(2+)(out) + ATP + H2O = Ni(2+)(in) + ADP + phosphate + H(+). Functionally, part of the ABC transporter complex NikABCDE (Opp2) involved in nickel import. Probably responsible for energy coupling to the transport system. The protein is Nickel import system ATP-binding protein NikD of Staphylococcus aureus (strain MSSA476).